Reading from the N-terminus, the 1849-residue chain is TATA-binding protein-associated factor 172 (1849 aa).

The interval N77–T97 is disordered. Residues E85 to T97 are compositionally biased toward polar residues. 2 positions are modified to phosphoserine: S91 and S95. Positions Q191 to R207 match the Nuclear localization signal motif. Residues F219–R247 are disordered. Residues R223–D236 are compositionally biased toward basic and acidic residues. HEAT repeat units lie at residues T385–D422, T426–Y463, Q513–Q550, S554–V596, T818–R855, E872–T910, P1102–M1139, and P1182–L1219. In terms of domain architecture, Helicase ATP-binding spans A1278 to G1453. ATP is bound at residue D1291–T1298. The DEGH box motif lies at D1404 to H1407. Residues S1636–G1790 form the Helicase C-terminal domain.

This sequence belongs to the SNF2/RAD54 helicase family. Associates with TBP to form B-TFIID. Binds DRAP1.

It localises to the nucleus. Its function is as follows. Regulates transcription in association with TATA binding protein (TBP). Removes TBP from the TATA box in an ATP-dependent manner. The protein is TATA-binding protein-associated factor 172 (BTAF1) of Homo sapiens (Human).